A 157-amino-acid polypeptide reads, in one-letter code: Vitamin K-dependent protein C (157 aa).

The Peptidase S1 domain maps to 1–157; sequence ENGEVDLDIQ…GCGRLHNYGV (157 aa). An N-linked (GlcNAc...) asparagine glycan is attached at asparagine 17. Aspartate 26 functions as the Charge relay system in the catalytic mechanism. N-linked (GlcNAc...) asparagine glycosylation occurs at asparagine 78. Cystine bridges form between cysteine 96–cysteine 110 and cysteine 121–cysteine 149. Serine 125 functions as the Charge relay system in the catalytic mechanism.

The protein belongs to the peptidase S1 family. In terms of tissue distribution, plasma; synthesized in the liver.

Its subcellular location is the secreted. The protein resides in the golgi apparatus. It is found in the endoplasmic reticulum. The enzyme catalyses Degradation of blood coagulation factors Va and VIIIa.. Functionally, protein C is a vitamin K-dependent serine protease that regulates blood coagulation by inactivating factors Va and VIIIa in the presence of calcium ions and phospholipids. Exerts a protective effect on the endothelial cell barrier function. In Equus caballus (Horse), this protein is Vitamin K-dependent protein C (PROC).